Here is a 617-residue protein sequence, read N- to C-terminus: uncharacterized protein (617 aa).

The chain crosses the membrane as a helical span at residues 103–123 (AGVLLAKFFPLLFLYPLTYLA). A Protein kinase domain is found at 200–609 (FETREPVGSG…DILEAAKPFL (410 aa)). ATP is bound by residues 206–214 (VGSGCVAQV) and Lys-302. Asp-436 (proton acceptor) is an active-site residue.

Belongs to the protein kinase superfamily. ADCK protein kinase family.

The protein localises to the mitochondrion. It is found in the membrane. The function of this protein is not yet clear. It is not known if it has protein kinase activity and what type of substrate it would phosphorylate (Ser, Thr or Tyr). Involved in the mitochondrial import of CoQ precursors, plays a role in muscle mitochondrial function and fatty acid beta-oxidation. This is an uncharacterized protein from Mus musculus (Mouse).